The chain runs to 45 residues: Protein PsbN (45 aa).

A helical transmembrane segment spans residues Phe12 to Gly30.

It belongs to the PsbN family.

The protein resides in the plastid. It is found in the chloroplast thylakoid membrane. Its function is as follows. May play a role in photosystem I and II biogenesis. The polypeptide is Protein PsbN (Adiantum capillus-veneris (Maidenhair fern)).